We begin with the raw amino-acid sequence, 161 residues long: Putative pre-16S rRNA nuclease (161 aa).

Belongs to the YqgF nuclease family.

Its subcellular location is the cytoplasm. Functionally, could be a nuclease involved in processing of the 5'-end of pre-16S rRNA. This is Putative pre-16S rRNA nuclease from Rhodospirillum rubrum (strain ATCC 11170 / ATH 1.1.1 / DSM 467 / LMG 4362 / NCIMB 8255 / S1).